A 38-amino-acid polypeptide reads, in one-letter code: Large ribosomal subunit protein bL36 (38 aa).

Belongs to the bacterial ribosomal protein bL36 family.

The polypeptide is Large ribosomal subunit protein bL36 (Chlorobium limicola (strain DSM 245 / NBRC 103803 / 6330)).